Reading from the N-terminus, the 98-residue chain is Large ribosomal subunit protein uL23 (98 aa).

The protein belongs to the universal ribosomal protein uL23 family. Part of the 50S ribosomal subunit. Contacts protein L29, and trigger factor when it is bound to the ribosome.

One of the early assembly proteins it binds 23S rRNA. One of the proteins that surrounds the polypeptide exit tunnel on the outside of the ribosome. Forms the main docking site for trigger factor binding to the ribosome. In Streptococcus pneumoniae serotype 19F (strain G54), this protein is Large ribosomal subunit protein uL23.